The following is a 391-amino-acid chain: Phosphoglycerate kinase (391 aa).

Residues 21-23, arginine 36, 59-62, arginine 113, and arginine 146 each bind substrate; these read DLN and HLGR. ATP-binding positions include lysine 197, glutamate 319, and 345–348; that span reads GGDT.

The protein belongs to the phosphoglycerate kinase family. As to quaternary structure, monomer.

It localises to the cytoplasm. It catalyses the reaction (2R)-3-phosphoglycerate + ATP = (2R)-3-phospho-glyceroyl phosphate + ADP. The protein operates within carbohydrate degradation; glycolysis; pyruvate from D-glyceraldehyde 3-phosphate: step 2/5. The sequence is that of Phosphoglycerate kinase from Shewanella baltica (strain OS155 / ATCC BAA-1091).